An 82-amino-acid chain; its full sequence is UPF0213 protein SH2523 (82 aa).

A GIY-YIG domain is found at 2-77 (AKHYVYIVKC…KTFSRQQKLK (76 aa)).

This sequence belongs to the UPF0213 family.

The polypeptide is UPF0213 protein SH2523 (Staphylococcus haemolyticus (strain JCSC1435)).